We begin with the raw amino-acid sequence, 146 residues long: D-aminoacyl-tRNA deacylase (146 aa).

Residues 137–138 (GP) carry the Gly-cisPro motif, important for rejection of L-amino acids motif.

The protein belongs to the DTD family. Homodimer.

The protein resides in the cytoplasm. The catalysed reaction is glycyl-tRNA(Ala) + H2O = tRNA(Ala) + glycine + H(+). The enzyme catalyses a D-aminoacyl-tRNA + H2O = a tRNA + a D-alpha-amino acid + H(+). Its function is as follows. An aminoacyl-tRNA editing enzyme that deacylates mischarged D-aminoacyl-tRNAs. Also deacylates mischarged glycyl-tRNA(Ala), protecting cells against glycine mischarging by AlaRS. Acts via tRNA-based rather than protein-based catalysis; rejects L-amino acids rather than detecting D-amino acids in the active site. By recycling D-aminoacyl-tRNA to D-amino acids and free tRNA molecules, this enzyme counteracts the toxicity associated with the formation of D-aminoacyl-tRNA entities in vivo and helps enforce protein L-homochirality. In Bacillus cytotoxicus (strain DSM 22905 / CIP 110041 / 391-98 / NVH 391-98), this protein is D-aminoacyl-tRNA deacylase.